Here is a 203-residue protein sequence, read N- to C-terminus: RNA annealing protein YRA2 (203 aa).

The residue at position 1 (methionine 1) is an N-acetylmethionine. 2 disordered regions span residues 1 to 60 (MDKA…REEP) and 134 to 203 (EIYQ…YMKG). Over residues 11–20 (NSHTDSSSNH) the composition is skewed to polar residues. Positions 47–60 (SRSKDRLYREREEP) are enriched in basic and acidic residues. The region spanning 64–138 (KRIRISKIPL…AKIEVEIYQP (75 aa)) is the RRM domain. Basic residues-rich tracts occupy residues 139 to 153 (QRKH…RRKQ) and 163 to 180 (PGSH…KNKG).

Belongs to the YRA1 family. Associates with mRNPs. Interacts with YRA1.

It is found in the nucleus. In terms of biological role, involved in export of poly(A) mRNAs from the nucleus. Recruited to the coding sequences as well as poly-A sites of active genes. This chain is RNA annealing protein YRA2 (YRA2), found in Saccharomyces cerevisiae (strain RM11-1a) (Baker's yeast).